The following is a 126-amino-acid chain: Profilin-1 (126 aa).

This sequence belongs to the profilin family. Occurs in many kinds of cells as a complex with monomeric actin in a 1:1 ratio.

It localises to the cytoplasm. The protein resides in the cytoskeleton. Functionally, binds to actin and affects the structure of the cytoskeleton. At high concentrations, profilin prevents the polymerization of actin, whereas it enhances it at low concentrations. By binding to PIP2, it inhibits the formation of IP3 and DG. This Dictyostelium discoideum (Social amoeba) protein is Profilin-1 (proA).